The sequence spans 179 residues: Riboflavin kinase (179 aa).

CDP is bound at residue 61 to 66 (GDGEGR). Mg(2+) is bound by residues Thr-90 and Asn-92. Positions 147 and 155 each coordinate FMN. CDP is bound at residue 160-163 (VELR).

It belongs to the archaeal riboflavin kinase family. It depends on Mg(2+) as a cofactor.

The enzyme catalyses riboflavin + CTP = CDP + FMN + H(+). Its pathway is cofactor biosynthesis; FMN biosynthesis; FMN from riboflavin (CTP route): step 1/1. Catalyzes the CTP-dependent phosphorylation of riboflavin (vitamin B2) to form flavin mononucleotide (FMN). The protein is Riboflavin kinase of Ignicoccus hospitalis (strain KIN4/I / DSM 18386 / JCM 14125).